Here is a 180-residue protein sequence, read N- to C-terminus: Large ribosomal subunit protein mL41 (180 aa).

The transit peptide at 1–21 directs the protein to the mitochondrion; the sequence is MKLVLVSTRGVRSLNSTNFPA.

It belongs to the mitochondrion-specific ribosomal protein mL41 family. In terms of assembly, component of the mitochondrial ribosome large subunit (39S) which comprises a 16S rRNA and about 50 distinct proteins.

It is found in the mitochondrion. In Caenorhabditis elegans, this protein is Large ribosomal subunit protein mL41 (mrpl-41).